The primary structure comprises 191 residues: Calcium-binding protein L (191 aa).

Glycine 2 carries the N-myristoyl glycine lipid modification. EF-hand domains are found at residues 25-59, 60-95, and 96-131; these read EQVS…RFKD, YDDA…ITKS, and PVSD…ALNT. Residues aspartate 73, aspartate 75, asparagine 77, arginine 79, and glutamate 84 each contribute to the Ca(2+) site.

This sequence belongs to the recoverin family.

The protein is Calcium-binding protein L (cbpL) of Dictyostelium discoideum (Social amoeba).